The chain runs to 108 residues: Small ribosomal subunit protein eS25y (108 aa).

A disordered region spans residues 1–36 (MAPKKDKVPPPSSKPAKSGGGKQKKKKWSKGKQKEK). Residues 22–31 (KQKKKKWSKG) show a composition bias toward basic residues.

The protein belongs to the eukaryotic ribosomal protein eS25 family.

This chain is Small ribosomal subunit protein eS25y (RPS25B), found in Arabidopsis thaliana (Mouse-ear cress).